The sequence spans 133 residues: Ribonuclease VapC17 (133 aa).

Residues Asp7 and Asp93 each contribute to the Mg(2+) site. The PINc domain maps to 30–118; it reads AICDIGELEW…HHDRDYKRIA (89 aa).

It belongs to the PINc/VapC protein family. The cofactor is Mg(2+).

Toxic component of a type II toxin-antitoxin (TA) system. An RNase. The cognate antitoxin is VapB17. The protein is Ribonuclease VapC17 of Mycobacterium tuberculosis (strain CDC 1551 / Oshkosh).